Consider the following 793-residue polypeptide: MQGEDARYLKRKVKGGNIDVHPSEKALIVQYEVEATILGEMGDPMLGERKECQKIIRLKSLNANTDITSLARKVVEECKLIHPSKLSEVEQLLYYLQNRRDSLPGKEKKEKSSKPKDPPPFEGMEIDEVANINDMDEYIELLYEDIPDKVRGSALILQLARNPDNLEELLLNETALGALARVLREDWKQSVELATNIIYIFFCFSSFSHFHGLITHYKIGALCMNIIDHELKRHELWQEELSKKKKAVDEDLENQTLRKDYDKTFKKYQGLVVKQEQLLRVALYLLLNLAEDTRTELKMRNKNIVHMLVKALDRDNFELLILVVSFLKKLSIFMENKNDMVEMDIVEKLVKMIPCEHEDLLNITLRLLLNLSFDTGLRNKMVQVGLLPKLTALLGNENYKQIAMCVLYHISMDDRFKSMFAYTDCIPQLMKMLFECSDERIDLELISFCINLAANKRNVQLICEGNGLKMLMKRALKLKDPLLMKMIRNISQHDGPTKNLFIDYVGDLAAQISSDEEEEFVIECLGTLANLTIPDLDWELVLKEYKLVPFLKDKLKPGAAEDDLVLEVVIMIGTVSMDDSCAALLAKSGIIPALIELLNAQQEDDEFVCQIIYVFYQMVFHQATRDVIIKETQAPAYLIDLMHDKNNEIRKVCDNTLDIIAEYDEEWAKKIQSEKFRWHNSQWLEMVESRQLDESEQYLYGDDRIEPYIHEGDILERPDLFYNSDGLITSEGAISPDFFNDFHLQNGDVVGQHAFPGSLGMDGFGQPLGILGRPATAYGFRPDEPYYYSFGSR.

A Phosphoserine modification is found at serine 60. The segment covering 103-119 (LPGKEKKEKSSKPKDPP) has biased composition (basic and acidic residues). A disordered region spans residues 103–123 (LPGKEKKEKSSKPKDPPPFEG). ARM repeat units lie at residues 333–373 (FMEN…NLSF), 374–412 (DTGL…HISM), 494–533 (DGPT…NLTI), 578–620 (DDSC…QMVF), and 621–662 (HQAT…IIAE).

Interacts with SMC3 subunit of the cohesin complex. Heterotrimer of KIFAP3, KIF3A and KIF3B. Interacts with RAP1GDS1/SMG GDS. Post-translationally, phosphorylated on tyrosine residues by SRC in vitro; this reduces the binding affinity of the protein for RAP1GDS1.

Its function is as follows. Involved in tethering the chromosomes to the spindle pole and in chromosome movement. Binds to the tail domain of the KIF3A/KIF3B heterodimer to form a heterotrimeric KIF3 complex and may regulate the membrane binding of this complex. This is Kinesin-associated protein 3 (Kifap3) from Mus musculus (Mouse).